Consider the following 329-residue polypeptide: DNA-directed RNA polymerase subunit alpha (329 aa).

An alpha N-terminal domain (alpha-NTD) region spans residues 1-235 (MQGSVTEFLK…EQLEAFVDLR (235 aa)). The interval 249 to 329 (FDPILLRPVD…NWPPASIADE (81 aa)) is alpha C-terminal domain (alpha-CTD).

This sequence belongs to the RNA polymerase alpha chain family. In terms of assembly, homodimer. The RNAP catalytic core consists of 2 alpha, 1 beta, 1 beta' and 1 omega subunit. When a sigma factor is associated with the core the holoenzyme is formed, which can initiate transcription.

It catalyses the reaction RNA(n) + a ribonucleoside 5'-triphosphate = RNA(n+1) + diphosphate. Functionally, DNA-dependent RNA polymerase catalyzes the transcription of DNA into RNA using the four ribonucleoside triphosphates as substrates. The polypeptide is DNA-directed RNA polymerase subunit alpha (Pectobacterium atrosepticum (strain SCRI 1043 / ATCC BAA-672) (Erwinia carotovora subsp. atroseptica)).